A 264-amino-acid polypeptide reads, in one-letter code: U1 snRNP-associated protein usp106 (264 aa).

Residues 83 to 126 are a coiled coil; sequence DYLEDLERHVDDCNKRIDIAEARREKTKEEEERIDELMRDIIHT. The segment covering 233-258 has biased composition (basic and acidic residues); it reads EDREKSRDKKDGEKQRDNLASFEDKI. Residues 233–264 form a disordered region; the sequence is EDREKSRDKKDGEKQRDNLASFEDKISTSFVA.

It belongs to the Luc7 family. In terms of assembly, component of the U1 snRNP particle, a subcomplex of the spliceosome.

Its subcellular location is the cytoplasm. It localises to the nucleus. Component of the U1 snRNP particle, which recognizes and binds the 5'-splice site of pre-mRNA. Together with other non-snRNP factors, U1 snRNP forms the spliceosomal commitment complex, that targets pre-mRNA to the splicing pathway. The sequence is that of U1 snRNP-associated protein usp106 (usp106) from Schizosaccharomyces pombe (strain 972 / ATCC 24843) (Fission yeast).